The chain runs to 213 residues: Peptidyl-tRNA hydrolase (213 aa).

Tyrosine 26 is a tRNA binding site. The active-site Proton acceptor is histidine 31. TRNA is bound by residues tyrosine 78, asparagine 80, and asparagine 126.

The protein belongs to the PTH family. Monomer.

The protein localises to the cytoplasm. It carries out the reaction an N-acyl-L-alpha-aminoacyl-tRNA + H2O = an N-acyl-L-amino acid + a tRNA + H(+). Its function is as follows. Hydrolyzes ribosome-free peptidyl-tRNAs (with 1 or more amino acids incorporated), which drop off the ribosome during protein synthesis, or as a result of ribosome stalling. Catalyzes the release of premature peptidyl moieties from peptidyl-tRNA molecules trapped in stalled 50S ribosomal subunits, and thus maintains levels of free tRNAs and 50S ribosomes. This is Peptidyl-tRNA hydrolase from Trichormus variabilis (strain ATCC 29413 / PCC 7937) (Anabaena variabilis).